Consider the following 637-residue polypeptide: 1-deoxy-D-xylulose-5-phosphate synthase (637 aa).

Residues His-74 and 115–117 (GHS) each bind thiamine diphosphate. Position 146 (Asp-146) interacts with Mg(2+). Residues 147-148 (GA), Asn-175, Tyr-285, and Glu-366 contribute to the thiamine diphosphate site. Asn-175 lines the Mg(2+) pocket.

It belongs to the transketolase family. DXPS subfamily. As to quaternary structure, homodimer. Requires Mg(2+) as cofactor. Thiamine diphosphate serves as cofactor.

The enzyme catalyses D-glyceraldehyde 3-phosphate + pyruvate + H(+) = 1-deoxy-D-xylulose 5-phosphate + CO2. Its pathway is metabolic intermediate biosynthesis; 1-deoxy-D-xylulose 5-phosphate biosynthesis; 1-deoxy-D-xylulose 5-phosphate from D-glyceraldehyde 3-phosphate and pyruvate: step 1/1. Its function is as follows. Catalyzes the acyloin condensation reaction between C atoms 2 and 3 of pyruvate and glyceraldehyde 3-phosphate to yield 1-deoxy-D-xylulose-5-phosphate (DXP). The sequence is that of 1-deoxy-D-xylulose-5-phosphate synthase from Pelotomaculum thermopropionicum (strain DSM 13744 / JCM 10971 / SI).